The chain runs to 49 residues: Small ribosomal subunit protein uS14B (49 aa).

Belongs to the universal ribosomal protein uS14 family. Zinc-binding uS14 subfamily. As to quaternary structure, part of the 30S ribosomal subunit.

In terms of biological role, binds 16S rRNA, required for the assembly of 30S particles. This Natronomonas pharaonis (strain ATCC 35678 / DSM 2160 / CIP 103997 / JCM 8858 / NBRC 14720 / NCIMB 2260 / Gabara) (Halobacterium pharaonis) protein is Small ribosomal subunit protein uS14B.